A 453-amino-acid polypeptide reads, in one-letter code: Serine/threonine-protein phosphatase 2A 55 kDa regulatory subunit B delta isoform (453 aa).

WD repeat units follow at residues 32 to 71, 97 to 138, 181 to 219, and 230 to 270; these read AEAD…KGRA, EIEE…KRAE, AHTY…RSFN, and ELTE…LCDR. Serine 285 carries the phosphoserine modification. WD repeat units lie at residues 289–327, 344–385, and 420–452; these read EIIS…RPVE, ENDC…DVTL, and DFNK…QDKI. Tyrosine 305 carries the phosphotyrosine modification. Threonine 308 bears the Phosphothreonine mark.

It belongs to the phosphatase 2A regulatory subunit B family. As to quaternary structure, PP2A consists of a common heterodimeric core enzyme, composed of a 36 kDa catalytic subunit (subunit C) and a 65 kDa constant regulatory subunit (PR65 or subunit A), that associates with a variety of regulatory subunits. Proteins that associate with the core dimer include three families of regulatory subunits B (the R2/B/PR55/B55, R3/B''/PR72/PR130/PR59 and R5/B'/B56 families), the 48 kDa variable regulatory subunit, viral proteins, and cell signaling molecules. Interacts with IER5.

The protein localises to the cytoplasm. Its function is as follows. Substrate-recognition subunit of protein phosphatase 2A (PP2A) that plays a key role in cell cycle by controlling mitosis entry and exit. Involved in chromosome clustering during late mitosis by mediating dephosphorylation of MKI67. The activity of PP2A complexes containing PPP2R2D (PR55-delta) fluctuate during the cell cycle: the activity is high in interphase and low in mitosis. This chain is Serine/threonine-protein phosphatase 2A 55 kDa regulatory subunit B delta isoform, found in Mus musculus (Mouse).